We begin with the raw amino-acid sequence, 309 residues long: Probable pathogenesis-related protein ARB_02861 (309 aa).

The N-terminal stretch at 1 to 17 (MKSSVLMTALCVAGSLA) is a signal peptide. The span at 47–59 (CPTVIPTTSYKPE) shows a compositional bias: low complexity. Positions 47–152 (CPTVIPTTSY…PPPPGKDYKE (106 aa)) are disordered. 2 stretches are compositionally biased toward pro residues: residues 61 to 92 (TSKP…PCPE) and 99 to 147 (APPP…PPPG). The SCP domain maps to 154-284 (AGYHHNVHRS…GDAYYTVCNY (131 aa)). An N-linked (GlcNAc...) asparagine glycan is attached at Asn164.

Belongs to the CRISP family.

It localises to the secreted. Functionally, secreted protein required for efficient export of lipids such as acetylated sterols. Acts in detoxification of hydrophobic compounds. This Arthroderma benhamiae (strain ATCC MYA-4681 / CBS 112371) (Trichophyton mentagrophytes) protein is Probable pathogenesis-related protein ARB_02861.